The primary structure comprises 517 residues: Tyrosine-protein kinase Fgr (517 aa).

G2 is lipidated: N-myristoyl glycine. 2 S-palmitoyl cysteine lipidation sites follow: C3 and C6. At S13 the chain carries Phosphoserine. Y32 carries the phosphotyrosine modification. S50 is modified (phosphoserine). The 62-residue stretch at 65–126 folds into the SH3 domain; that stretch reads TGVTIFVALY…PSNYVAPVDS (62 aa). The tract at residues 102-103 is interaction with CLNK; it reads WW. The SH2 domain maps to 132-229; sequence WYFGKISRKD…GLCYLLTAPC (98 aa). Y196 bears the Phosphotyrosine mark. S206 is modified (phosphoserine). The Protein kinase domain occupies 251-504; it reads IALERRLGTG…YLQSFLEDYF (254 aa). ATP contacts are provided by residues 257 to 265 and K279; that span reads LGTGCFGDV. D370 (proton acceptor) is an active-site residue. Position 400 is a phosphotyrosine (Y400). The residue at position 511 (Y511) is a Phosphotyrosine; by SRC.

The protein belongs to the protein kinase superfamily. Tyr protein kinase family. SRC subfamily. Interacts with ITGB1, ITGB2, MS4A2/FCER1B, FCER1G and FCGR2. Interacts (via SH2 domain) with SYK (tyrosine phosphorylated). Interacts (via SH2 domain) with FLT3 (tyrosine phosphorylated). Interacts with PTK2/FAK1. Interacts (via SH2 domain) with HCLS1 (tyrosine phosphorylated by SYK). Interacts with SIRPA and PTPNS1. Interacts (not phosphorylated on tyrosine residues) with CBL; FGR tyrosine phosphorylation promotes dissociation. Interacts with CLNK. Post-translationally, ubiquitinated. Becomes ubiquitinated in response to ITGB2 signaling; this does not lead to degradation. In terms of processing, phosphorylated. Autophosphorylated on tyrosine residues. Becomes phosphorylated in response to FCGR2 engagement, cell adhesion and signaling by ITGB2. Prior phosphorylation at Tyr-511 by SRC inhibits ulterior autophosphorylation at Tyr-400. As to expression, expressed in natural killer cells (at protein level).

It is found in the cell membrane. The protein resides in the cell projection. It localises to the ruffle membrane. Its subcellular location is the cytoplasm. The protein localises to the cytosol. It is found in the cytoskeleton. The protein resides in the mitochondrion inner membrane. It localises to the mitochondrion intermembrane space. The catalysed reaction is L-tyrosyl-[protein] + ATP = O-phospho-L-tyrosyl-[protein] + ADP + H(+). Activated by autophosphorylation. Prior phosphorylation at Tyr-511 by SRC inhibits ulterior autophosphorylation at Tyr-400. Activated by phorbol myristate acetate, phosphatidic acid and poly-Lys. Binding (via SH2 domain) of HCLS1 that is already phosphorylated by SYK strongly increases kinase activity. Non-receptor tyrosine-protein kinase that transmits signals from cell surface receptors devoid of kinase activity and contributes to the regulation of immune responses, including neutrophil, monocyte, macrophage and mast cell functions, cytoskeleton remodeling in response to extracellular stimuli, phagocytosis, cell adhesion and migration. Promotes mast cell degranulation, release of inflammatory cytokines and IgE-mediated anaphylaxis. Acts downstream of receptors that bind the Fc region of immunoglobulins, such as MS4A2/FCER1B, FCER1G and FCGR2. Acts downstream of ITGB1 and ITGB2, and regulates actin cytoskeleton reorganization, cell spreading and adhesion. Depending on the context, activates or inhibits cellular responses. Functions as a negative regulator of ITGB2 signaling, phagocytosis and SYK activity in monocytes. Required for normal ITGB1 and ITGB2 signaling, normal cell spreading and adhesion in neutrophils and macrophages. Functions as a positive regulator of cell migration and regulates cytoskeleton reorganization via RAC1 activation. Phosphorylates SYK (in vitro) and promotes SYK-dependent activation of AKT1 and MAP kinase signaling. Phosphorylates PLD2 in antigen-stimulated mast cells, leading to PLD2 activation and the production of the signaling molecules lysophosphatidic acid and diacylglycerol. Promotes activation of PIK3R1. Phosphorylates FASLG, and thereby regulates its ubiquitination and subsequent internalization. Phosphorylates ABL1. Promotes phosphorylation of CBL, CTTN, PIK3R1, PTK2/FAK1, PTK2B/PYK2 and VAV2. Phosphorylates HCLS1 that has already been phosphorylated by SYK, but not unphosphorylated HCLS1. Together with CLNK, it acts as a negative regulator of natural killer cell-activating receptors and inhibits interferon-gamma production. This chain is Tyrosine-protein kinase Fgr (Fgr), found in Mus musculus (Mouse).